Consider the following 460-residue polypeptide: ATP synthase subunit beta (460 aa).

150 to 157 (GGAGVGKT) provides a ligand contact to ATP.

Belongs to the ATPase alpha/beta chains family. In terms of assembly, F-type ATPases have 2 components, CF(1) - the catalytic core - and CF(0) - the membrane proton channel. CF(1) has five subunits: alpha(3), beta(3), gamma(1), delta(1), epsilon(1). CF(0) has three main subunits: a(1), b(2) and c(9-12). The alpha and beta chains form an alternating ring which encloses part of the gamma chain. CF(1) is attached to CF(0) by a central stalk formed by the gamma and epsilon chains, while a peripheral stalk is formed by the delta and b chains.

The protein resides in the cell inner membrane. The catalysed reaction is ATP + H2O + 4 H(+)(in) = ADP + phosphate + 5 H(+)(out). Produces ATP from ADP in the presence of a proton gradient across the membrane. The catalytic sites are hosted primarily by the beta subunits. The chain is ATP synthase subunit beta from Shigella dysenteriae serotype 1 (strain Sd197).